We begin with the raw amino-acid sequence, 152 residues long: uncharacterized protein (152 aa).

N-linked (GlcNAc...) asparagine; by host glycosylation is present at N2. Helical transmembrane passes span 5–25 (MILL…MNLW), 36–56 (LNDF…CYIL), and 68–88 (LIIT…QAFI). The N-linked (GlcNAc...) asparagine; by host glycan is linked to N113.

It is found in the membrane. This is an uncharacterized protein from Acanthamoeba polyphaga mimivirus (APMV).